A 371-amino-acid polypeptide reads, in one-letter code: DNA replication and repair protein RecF (371 aa).

An ATP-binding site is contributed by 30-37 (GPNAQGKT).

Belongs to the RecF family.

It is found in the cytoplasm. In terms of biological role, the RecF protein is involved in DNA metabolism; it is required for DNA replication and normal SOS inducibility. RecF binds preferentially to single-stranded, linear DNA. It also seems to bind ATP. The chain is DNA replication and repair protein RecF from Desulforamulus reducens (strain ATCC BAA-1160 / DSM 100696 / MI-1) (Desulfotomaculum reducens).